The chain runs to 407 residues: Imidazolonepropionase (407 aa).

Fe(3+)-binding residues include His-74 and His-76. 2 residues coordinate Zn(2+): His-74 and His-76. Positions 83, 146, and 179 each coordinate 4-imidazolone-5-propanoate. Tyr-146 is an N-formimidoyl-L-glutamate binding site. His-244 provides a ligand contact to Fe(3+). Zn(2+) is bound at residue His-244. Gln-247 provides a ligand contact to 4-imidazolone-5-propanoate. Asp-319 lines the Fe(3+) pocket. Asp-319 contacts Zn(2+). Residues Asn-321 and Gly-323 each coordinate N-formimidoyl-L-glutamate. Position 324 (Thr-324) interacts with 4-imidazolone-5-propanoate.

It belongs to the metallo-dependent hydrolases superfamily. HutI family. Requires Zn(2+) as cofactor. Fe(3+) serves as cofactor.

It is found in the cytoplasm. It catalyses the reaction 4-imidazolone-5-propanoate + H2O = N-formimidoyl-L-glutamate. The protein operates within amino-acid degradation; L-histidine degradation into L-glutamate; N-formimidoyl-L-glutamate from L-histidine: step 3/3. In terms of biological role, catalyzes the hydrolytic cleavage of the carbon-nitrogen bond in imidazolone-5-propanoate to yield N-formimidoyl-L-glutamate. It is the third step in the universal histidine degradation pathway. The chain is Imidazolonepropionase from Salmonella typhi.